A 500-amino-acid polypeptide reads, in one-letter code: NADH-quinone oxidoreductase subunit N (500 aa).

A run of 14 helical transmembrane segments spans residues valine 13–phenylalanine 33, leucine 42–tryptophan 62, phenylalanine 79–isoleucine 99, glycine 111–glycine 131, leucine 133–isoleucine 153, valine 168–phenylalanine 188, tyrosine 211–alanine 231, threonine 245–leucine 265, alanine 281–isoleucine 301, valine 321–alanine 341, isoleucine 342–valine 362, alanine 386–isoleucine 406, valine 424–phenylalanine 444, and proline 461–phenylalanine 481.

It belongs to the complex I subunit 2 family. NDH-1 is composed of 14 different subunits. Subunits NuoA, H, J, K, L, M, N constitute the membrane sector of the complex.

The protein localises to the cell membrane. The enzyme catalyses a quinone + NADH + 5 H(+)(in) = a quinol + NAD(+) + 4 H(+)(out). Its function is as follows. NDH-1 shuttles electrons from NADH, via FMN and iron-sulfur (Fe-S) centers, to quinones in the respiratory chain. The immediate electron acceptor for the enzyme in this species is believed to be a menaquinone. Couples the redox reaction to proton translocation (for every two electrons transferred, four hydrogen ions are translocated across the cytoplasmic membrane), and thus conserves the redox energy in a proton gradient. The chain is NADH-quinone oxidoreductase subunit N from Anoxybacillus flavithermus (strain DSM 21510 / WK1).